The sequence spans 718 residues: Ribosomal RNA large subunit methyltransferase K/L (718 aa).

Positions 44–155 (DAYKVCIYSY…KQFVNVFLCL (112 aa)) constitute a THUMP domain.

It belongs to the methyltransferase superfamily. RlmKL family.

The protein localises to the cytoplasm. The catalysed reaction is guanosine(2445) in 23S rRNA + S-adenosyl-L-methionine = N(2)-methylguanosine(2445) in 23S rRNA + S-adenosyl-L-homocysteine + H(+). It catalyses the reaction guanosine(2069) in 23S rRNA + S-adenosyl-L-methionine = N(2)-methylguanosine(2069) in 23S rRNA + S-adenosyl-L-homocysteine + H(+). Specifically methylates the guanine in position 2445 (m2G2445) and the guanine in position 2069 (m7G2069) of 23S rRNA. This is Ribosomal RNA large subunit methyltransferase K/L from Francisella tularensis subsp. novicida (strain U112).